A 193-amino-acid chain; its full sequence is Pyridoxal 5'-phosphate synthase subunit PdxT (193 aa).

Residue 50-52 participates in L-glutamine binding; the sequence is GES. Cys82 (nucleophile) is an active-site residue. Residues Arg109 and 136–137 each bind L-glutamine; that span reads IR. Catalysis depends on charge relay system residues His172 and Glu174.

This sequence belongs to the glutaminase PdxT/SNO family. In the presence of PdxS, forms a dodecamer of heterodimers. Only shows activity in the heterodimer.

The catalysed reaction is aldehydo-D-ribose 5-phosphate + D-glyceraldehyde 3-phosphate + L-glutamine = pyridoxal 5'-phosphate + L-glutamate + phosphate + 3 H2O + H(+). The enzyme catalyses L-glutamine + H2O = L-glutamate + NH4(+). It participates in cofactor biosynthesis; pyridoxal 5'-phosphate biosynthesis. In terms of biological role, catalyzes the hydrolysis of glutamine to glutamate and ammonia as part of the biosynthesis of pyridoxal 5'-phosphate. The resulting ammonia molecule is channeled to the active site of PdxS. The chain is Pyridoxal 5'-phosphate synthase subunit PdxT from Streptococcus pneumoniae serotype 2 (strain D39 / NCTC 7466).